The chain runs to 413 residues: 26S proteasome regulatory subunit 6B homolog (413 aa).

Residues 1–30 (MATAMVLDPKPAEKLPATRPETSITDVPSD) are disordered. Residues 32-80 (EDDLYARLKSLQRQLEFIEIQEEYVKDELKNLRREHLRAQEEVKRIQSV) adopt a coiled-coil conformation. 201-208 (GPPGTGKT) is an ATP binding site.

This sequence belongs to the AAA ATPase family.

Its subcellular location is the cytoplasm. The protein localises to the nucleus. In terms of biological role, the 26S proteasome is involved in the ATP-dependent degradation of ubiquitinated proteins. The regulatory (or ATPase) complex confers ATP dependency and substrate specificity to the 26S complex. The chain is 26S proteasome regulatory subunit 6B homolog from Solanum tuberosum (Potato).